Consider the following 367-residue polypeptide: Phosphoribosylaminoimidazole-succinocarboxamide synthase (367 aa).

The protein belongs to the SAICAR synthetase family.

The enzyme catalyses 5-amino-1-(5-phospho-D-ribosyl)imidazole-4-carboxylate + L-aspartate + ATP = (2S)-2-[5-amino-1-(5-phospho-beta-D-ribosyl)imidazole-4-carboxamido]succinate + ADP + phosphate + 2 H(+). It participates in purine metabolism; IMP biosynthesis via de novo pathway; 5-amino-1-(5-phospho-D-ribosyl)imidazole-4-carboxamide from 5-amino-1-(5-phospho-D-ribosyl)imidazole-4-carboxylate: step 1/2. The polypeptide is Phosphoribosylaminoimidazole-succinocarboxamide synthase (Vibrio atlanticus (strain LGP32) (Vibrio splendidus (strain Mel32))).